Reading from the N-terminus, the 161-residue chain is Crossover junction endodeoxyribonuclease RuvC (161 aa).

Active-site residues include D7, E67, and D139. Positions 7, 67, and 139 each coordinate Mg(2+).

This sequence belongs to the RuvC family. Homodimer which binds Holliday junction (HJ) DNA. The HJ becomes 2-fold symmetrical on binding to RuvC with unstacked arms; it has a different conformation from HJ DNA in complex with RuvA. In the full resolvosome a probable DNA-RuvA(4)-RuvB(12)-RuvC(2) complex forms which resolves the HJ. Requires Mg(2+) as cofactor.

It localises to the cytoplasm. It carries out the reaction Endonucleolytic cleavage at a junction such as a reciprocal single-stranded crossover between two homologous DNA duplexes (Holliday junction).. Functionally, the RuvA-RuvB-RuvC complex processes Holliday junction (HJ) DNA during genetic recombination and DNA repair. Endonuclease that resolves HJ intermediates. Cleaves cruciform DNA by making single-stranded nicks across the HJ at symmetrical positions within the homologous arms, yielding a 5'-phosphate and a 3'-hydroxyl group; requires a central core of homology in the junction. The consensus cleavage sequence is 5'-(A/T)TT(C/G)-3'. Cleavage occurs on the 3'-side of the TT dinucleotide at the point of strand exchange. HJ branch migration catalyzed by RuvA-RuvB allows RuvC to scan DNA until it finds its consensus sequence, where it cleaves and resolves the cruciform DNA. The protein is Crossover junction endodeoxyribonuclease RuvC of Syntrophotalea carbinolica (strain DSM 2380 / NBRC 103641 / GraBd1) (Pelobacter carbinolicus).